The chain runs to 398 residues: Cyclin-dependent kinase D-1 (398 aa).

Residues 11–291 (YLKREVLGQG…IQQALKHRYF (281 aa)) enclose the Protein kinase domain. ATP-binding positions include 17-25 (LGQGTYGVV) and lysine 40. Tyrosine 22 is modified (phosphotyrosine). The active-site Proton acceptor is the aspartate 133. At serine 160 the chain carries Phosphoserine. Phosphothreonine is present on threonine 166. The disordered stretch occupies residues 296 to 318 (SPTDPLKLPRPVSKQDAKSSDSK). Residues 308 to 318 (SKQDAKSSDSK) are compositionally biased toward basic and acidic residues.

This sequence belongs to the protein kinase superfamily. CMGC Ser/Thr protein kinase family. CDC2/CDKX subfamily. Post-translationally, autophosphorylated. Expressed at low levels in suspension cell culture, but not in plant organs.

The protein resides in the nucleus. It catalyses the reaction L-seryl-[protein] + ATP = O-phospho-L-seryl-[protein] + ADP + H(+). It carries out the reaction L-threonyl-[protein] + ATP = O-phospho-L-threonyl-[protein] + ADP + H(+). The enzyme catalyses [DNA-directed RNA polymerase] + ATP = phospho-[DNA-directed RNA polymerase] + ADP + H(+). The protein is Cyclin-dependent kinase D-1 (CDKD-1) of Arabidopsis thaliana (Mouse-ear cress).